A 276-amino-acid polypeptide reads, in one-letter code: Large ribosomal subunit protein uL2 (276 aa).

Residues 219–276 (TVRGSAMNPNDHPHGGGEGRSPIGRPSPVTPWGKPALGYKTRKKNKHSDKFIVTGRKR) are disordered.

The protein belongs to the universal ribosomal protein uL2 family. In terms of assembly, part of the 50S ribosomal subunit. Forms a bridge to the 30S subunit in the 70S ribosome.

One of the primary rRNA binding proteins. Required for association of the 30S and 50S subunits to form the 70S ribosome, for tRNA binding and peptide bond formation. It has been suggested to have peptidyltransferase activity; this is somewhat controversial. Makes several contacts with the 16S rRNA in the 70S ribosome. This is Large ribosomal subunit protein uL2 from Alkaliphilus metalliredigens (strain QYMF).